Reading from the N-terminus, the 71-residue chain is UPF0499 protein ACLA_083080 (71 aa).

The signal sequence occupies residues methionine 1–alanine 18. Cystine bridges form between cysteine 44/cysteine 58, cysteine 48/cysteine 61, and cysteine 54/cysteine 68.

This sequence belongs to the UPF0499 family.

It localises to the secreted. The protein is UPF0499 protein ACLA_083080 of Aspergillus clavatus (strain ATCC 1007 / CBS 513.65 / DSM 816 / NCTC 3887 / NRRL 1 / QM 1276 / 107).